The sequence spans 100 residues: Large ribosomal subunit protein uL23 (100 aa).

It belongs to the universal ribosomal protein uL23 family. Part of the 50S ribosomal subunit. Contacts protein L29, and trigger factor when it is bound to the ribosome.

Its function is as follows. One of the early assembly proteins it binds 23S rRNA. One of the proteins that surrounds the polypeptide exit tunnel on the outside of the ribosome. Forms the main docking site for trigger factor binding to the ribosome. The polypeptide is Large ribosomal subunit protein uL23 (Mycolicibacterium smegmatis (strain ATCC 700084 / mc(2)155) (Mycobacterium smegmatis)).